Consider the following 311-residue polypeptide: Small ribosomal subunit biogenesis GTPase RsgA (311 aa).

Residues 88-246 (SKEKEQVIVA…VIDTPGIREF (159 aa)) enclose the CP-type G domain. GTP is bound by residues 137 to 140 (NKID) and 188 to 196 (GHSGVGKST). Zn(2+)-binding residues include Cys270, Cys275, His277, and Cys283.

Belongs to the TRAFAC class YlqF/YawG GTPase family. RsgA subfamily. As to quaternary structure, monomer. Associates with 30S ribosomal subunit, binds 16S rRNA. The cofactor is Zn(2+).

The protein localises to the cytoplasm. One of several proteins that assist in the late maturation steps of the functional core of the 30S ribosomal subunit. Helps release RbfA from mature subunits. May play a role in the assembly of ribosomal proteins into the subunit. Circularly permuted GTPase that catalyzes slow GTP hydrolysis, GTPase activity is stimulated by the 30S ribosomal subunit. The sequence is that of Small ribosomal subunit biogenesis GTPase RsgA from Chlorobaculum tepidum (strain ATCC 49652 / DSM 12025 / NBRC 103806 / TLS) (Chlorobium tepidum).